The sequence spans 307 residues: Homoserine kinase (307 aa).

85–95 (PLTRGLGSSAA) is an ATP binding site.

It belongs to the GHMP kinase family. Homoserine kinase subfamily.

The protein resides in the cytoplasm. The enzyme catalyses L-homoserine + ATP = O-phospho-L-homoserine + ADP + H(+). The protein operates within amino-acid biosynthesis; L-threonine biosynthesis; L-threonine from L-aspartate: step 4/5. Its function is as follows. Catalyzes the ATP-dependent phosphorylation of L-homoserine to L-homoserine phosphate. This is Homoserine kinase from Caldicellulosiruptor bescii (strain ATCC BAA-1888 / DSM 6725 / KCTC 15123 / Z-1320) (Anaerocellum thermophilum).